Consider the following 642-residue polypeptide: Cylicin-1 (642 aa).

2 disordered regions span residues 167 to 203 (NGEP…NLEY) and 284 to 607 (NCSQ…CEPF). Over residues 191-203 (KTSNSTSETNLEY) the composition is skewed to polar residues. Repeat copies occupy residues 294–313 (LKTG…GSKD), 314–344 (AKKE…DSKD), 345–391 (GKKK…KKST), 392–432 (GSTG…SSKK), 433–464 (SKKD…SEGD), 465–500 (STGK…SDLG), 501–526 (VNKK…SKAG), and 527–543 (RRKN…DSSG). Residues 298-316 (GKKERDSDIDSGGSKDAKK) are compositionally biased toward basic and acidic residues. A compositionally biased stretch (basic residues) spans 317–330 (EGKKKGKRESRKKR). Basic and acidic residues predominate over residues 353–364 (KKNEIKKKKDTD). The segment covering 388 to 404 (KKSTGSTGSESVDSKST) has biased composition (low complexity). Residues 405 to 416 (NKVKKQVKKGVM) are compositionally biased toward basic residues. The span at 428–440 (ASSKKSKKDEKKE) shows a compositional bias: basic and acidic residues. Positions 454 to 463 (STDADSESEG) are enriched in acidic residues. The span at 465-488 (STGKKNEKKDKKITKKGEKKDAKK) shows a compositional bias: basic and acidic residues. Low complexity predominate over residues 513 to 523 (SFSDSTSDSYS). The segment at 527 to 543 (RRKNVRRSDSESEDSSG) is 8 X approximate tandem repeats.

As to quaternary structure, interacts with proteins of spermatozoa head including ACTL7A, CCIN, FAM209 and SPACA1; the interactions may be necessary for proper acrosome attachment to the nuclear envelope. As to expression, testis.

It localises to the cytoplasm. It is found in the cytoskeleton. Its subcellular location is the perinuclear theca. The protein resides in the calyx. Its function is as follows. Plays a role in the establishment of normal sperm morphology during spermatogenesis and is required for acrosome attachment to the nuclear envelope. The sequence is that of Cylicin-1 from Mus musculus (Mouse).